A 240-amino-acid polypeptide reads, in one-letter code: Flavin-dependent thymidylate synthase (240 aa).

One can recognise a ThyX domain in the interval 13 to 235; that stretch reads ITVELVKHSA…PETHAAFEKQ (223 aa). FAD is bound by residues Ser64, 87–89, and Glu95; that span reads RHR. DUMP-binding positions include 84–87, 95–99, and Arg167; these read EFMR and EESGR. Residues 87 to 97 carry the ThyX motif motif; that stretch reads RHRIASYNEES. FAD-binding positions include 183–185 and Asn189; that span reads NAR. Residue Arg194 participates in dUMP binding. Arg194 functions as the Involved in ionization of N3 of dUMP, leading to its activation in the catalytic mechanism.

It belongs to the thymidylate synthase ThyX family. In terms of assembly, homotetramer. FAD serves as cofactor.

The enzyme catalyses dUMP + (6R)-5,10-methylene-5,6,7,8-tetrahydrofolate + NADPH + H(+) = dTMP + (6S)-5,6,7,8-tetrahydrofolate + NADP(+). Its pathway is pyrimidine metabolism; dTTP biosynthesis. Catalyzes the reductive methylation of 2'-deoxyuridine-5'-monophosphate (dUMP) to 2'-deoxythymidine-5'-monophosphate (dTMP) while utilizing 5,10-methylenetetrahydrofolate (mTHF) as the methyl donor, and NADPH and FADH(2) as the reductant. This is Flavin-dependent thymidylate synthase from Tropheryma whipplei (strain TW08/27) (Whipple's bacillus).